Consider the following 180-residue polypeptide: Isopentenyl-diphosphate Delta-isomerase (180 aa).

His22 and His28 together coordinate Mn(2+). The Nudix hydrolase domain occupies 26-160; the sequence is LKHKAVSVFA…PERFTPWLKI (135 aa). Cys62 is a catalytic residue. Cys62 lines the Mg(2+) pocket. Residue His64 coordinates Mn(2+). Mg(2+) is bound at residue Glu82. The Mn(2+) site is built by Glu108 and Glu110. Residue Glu110 is part of the active site.

The protein belongs to the IPP isomerase type 1 family. The cofactor is Mg(2+). It depends on Mn(2+) as a cofactor.

The protein localises to the cytoplasm. It carries out the reaction isopentenyl diphosphate = dimethylallyl diphosphate. It participates in isoprenoid biosynthesis; dimethylallyl diphosphate biosynthesis; dimethylallyl diphosphate from isopentenyl diphosphate: step 1/1. In terms of biological role, catalyzes the 1,3-allylic rearrangement of the homoallylic substrate isopentenyl (IPP) to its highly electrophilic allylic isomer, dimethylallyl diphosphate (DMAPP). This Ruegeria pomeroyi (strain ATCC 700808 / DSM 15171 / DSS-3) (Silicibacter pomeroyi) protein is Isopentenyl-diphosphate Delta-isomerase.